We begin with the raw amino-acid sequence, 473 residues long: Photosystem II CP43 reaction center protein (473 aa).

A propeptide spanning residues 1–14 is cleaved from the precursor; the sequence is MKTLYSLRRFYHVE. Threonine 15 carries the post-translational modification N-acetylthreonine. Phosphothreonine is present on threonine 15. 5 helical membrane-spanning segments follow: residues 69–93, 134–155, 178–200, 255–275, and 291–312; these read LFEV…PHLA, LIGP…RDKN, KAIY…RIID, KPFA…LSYS, and WYNN…ASQS. Residue glutamate 367 participates in [CaMn4O5] cluster binding. Residues 447–471 traverse the membrane as a helical segment; that stretch reads RARAAAAGFEKGINRENEPVLTLRP.

This sequence belongs to the PsbB/PsbC family. PsbC subfamily. PSII is composed of 1 copy each of membrane proteins PsbA, PsbB, PsbC, PsbD, PsbE, PsbF, PsbH, PsbI, PsbJ, PsbK, PsbL, PsbM, PsbT, PsbX, PsbY, PsbZ, Psb30/Ycf12, at least 3 peripheral proteins of the oxygen-evolving complex and a large number of cofactors. It forms dimeric complexes. Requires Binds multiple chlorophylls and provides some of the ligands for the Ca-4Mn-5O cluster of the oxygen-evolving complex. It may also provide a ligand for a Cl- that is required for oxygen evolution. PSII binds additional chlorophylls, carotenoids and specific lipids. as cofactor.

The protein localises to the plastid. It localises to the chloroplast thylakoid membrane. One of the components of the core complex of photosystem II (PSII). It binds chlorophyll and helps catalyze the primary light-induced photochemical processes of PSII. PSII is a light-driven water:plastoquinone oxidoreductase, using light energy to abstract electrons from H(2)O, generating O(2) and a proton gradient subsequently used for ATP formation. The sequence is that of Photosystem II CP43 reaction center protein from Guillardia theta (Cryptophyte).